The primary structure comprises 292 residues: 4-hydroxy-tetrahydrodipicolinate synthase (292 aa).

Position 44 (Thr44) interacts with pyruvate. The active-site Proton donor/acceptor is the Tyr132. The active-site Schiff-base intermediate with substrate is Lys160. Ile202 lines the pyruvate pocket.

The protein belongs to the DapA family. Homotetramer; dimer of dimers.

It localises to the cytoplasm. The enzyme catalyses L-aspartate 4-semialdehyde + pyruvate = (2S,4S)-4-hydroxy-2,3,4,5-tetrahydrodipicolinate + H2O + H(+). Its pathway is amino-acid biosynthesis; L-lysine biosynthesis via DAP pathway; (S)-tetrahydrodipicolinate from L-aspartate: step 3/4. Catalyzes the condensation of (S)-aspartate-beta-semialdehyde [(S)-ASA] and pyruvate to 4-hydroxy-tetrahydrodipicolinate (HTPA). This chain is 4-hydroxy-tetrahydrodipicolinate synthase, found in Magnetococcus marinus (strain ATCC BAA-1437 / JCM 17883 / MC-1).